Reading from the N-terminus, the 201-residue chain is ATP synthase subunit b 2 (201 aa).

The span at 1 to 17 (MAEQKNPLTTPSPNADT) shows a compositional bias: polar residues. Residues 1–39 (MAEQKNPLTTPSPNADTTIVPAGSPHTHTEQPSGGHGGA) form a disordered region. The helical transmembrane segment at 47 to 66 (TFLSQLIWLALAFGLLYYLM) threads the bilayer.

Belongs to the ATPase B chain family. F-type ATPases have 2 components, F(1) - the catalytic core - and F(0) - the membrane proton channel. F(1) has five subunits: alpha(3), beta(3), gamma(1), delta(1), epsilon(1). F(0) has three main subunits: a(1), b(2) and c(10-14). The alpha and beta chains form an alternating ring which encloses part of the gamma chain. F(1) is attached to F(0) by a central stalk formed by the gamma and epsilon chains, while a peripheral stalk is formed by the delta and b chains.

Its subcellular location is the cell inner membrane. Functionally, f(1)F(0) ATP synthase produces ATP from ADP in the presence of a proton or sodium gradient. F-type ATPases consist of two structural domains, F(1) containing the extramembraneous catalytic core and F(0) containing the membrane proton channel, linked together by a central stalk and a peripheral stalk. During catalysis, ATP synthesis in the catalytic domain of F(1) is coupled via a rotary mechanism of the central stalk subunits to proton translocation. Component of the F(0) channel, it forms part of the peripheral stalk, linking F(1) to F(0). The b'-subunit is a diverged and duplicated form of b found in plants and photosynthetic bacteria. The sequence is that of ATP synthase subunit b 2 (atpF2) from Methylorubrum extorquens (strain PA1) (Methylobacterium extorquens).